Reading from the N-terminus, the 1893-residue chain is MEGCVGEESFQMWELNRRLEAYLTRVKTLEEQNQLLSAELGGLRAQSGDTSWRARADDELASLRILVDQRWREKLEAEVQRDNLAEELESVAGRCQQVRLARERTVQEAACSRRALEAEKNARGWLSTQAAELERELEALRAAHEEERAHLNAQAACAPRRPPAPPHGSPVRAPEVEDLARRLGEVWRGAVRDYQERVAHMESSLGQARERLSQAVRGARECRLEVQQLQADRDSLQERREALEQRLEGRWQDRLQATDKFQLAVEALEQEKQGLQSQIAQILEGGQQLAHLKMSLSLEVATYRTLLEAENSRLQTPGRGSQASLGFLDPKLKPNFLGIPEDQYLGSVLPALSPTSFPSPLPNTLETPVTAFLKTQEFLQARTPTLASTPIPPISEAPCPPNAEVRAQEVPLSLLQTQAPEPLWAEATVPSSSAILPELEEPGGKQQGHFPDDLTSLATTLNPHHPTLEAKDGESSGSRVSSIFQEDEGQIWELVEKEADIEVKVENSSAQKTQESGLDTEETQDSQGPLQKETLKALGEEPLMSLKIQNYETAGKENCNSSTEGHLGTLEGPEKEKQIPLKSLEEKNVESEKTLENGVPVLSELLGKEDTRTEDQELMSPKGTLKRFSSLGKESQEVVRPSKEGNLESWTAFKEESQHPLGFPGAEDQMLERLVEKEDQSFPRSPEEEDQEACRPLQKENQEPLGYEEAEGQILERLIEKESQESLRSPEEEDQEAGRSLQKGNQEPLGYEEAEGQILERLIEKESQESLRSAEEEDQEACRSLQKENQEPLGYEEAEDQILERLIEKESQESLRSPEEEDQEAGRSLQKENQEPLGYEEAEDQMLERLIEKESQESLKSPEENQRIGKPLERENQKSLRYLEENQETFVPLESRNQRPLRSLEVEEEEQRIVKPLEKVSQDSLGSLAEENVQPLRYLEEDNCINKSLLEDKTHKSLGSLEDRNGDSIIIPQESETQVSLRPPEEEDQRIVNHLEKESQEFSRSSEEEERVMERSLEGENHESLSSVEKEDQMVESQLEKESQDSGKSLEDESQETFGPLEKENAESLRSLAGQDQEEQKLEQETQQTLRAVGNEQMAVSPPEKVDPELPKPLGNDQEIARSLGKENQESLVSLKEKGIETVKSLETEIIEPLETAEEDLERRKSIDTQEPLWSTEVARETVEPPEDEPPGSLGSVDENRETLTSLEKESQELSSLGKWNVETRVEDSQQCLQVEEGLQEEQHQESLREVKQELPSSGNQQRWEDVVEGKAVGQEAPLATTGVGTEDKAELHLRGQGGEEEAAAEGELLQDIVGEAWSLGSSEPKEQRVPAEALDNLEGGALEVPVAQSMPEVTERDEDRAQAGEQDSIEVTLGLEAARTGLELEQEVVGLEDPRHFAREEAIPPSLGEESVKAKIAQGLEGPGKEPKEAGALDSGILELPKTSSEALECQGHEESESMEGWEEEEASLETSDHEGSDAPQPRPPETEEDEGAQAALTAPGPKLLEPCSPIPILTDAHELQPQAEGIQEAGWQPEAGSEALERVENEPEFGLGEIPEGLQDWEEGREESEADDLGETLPDSTPLGLYLRSPASPKWDLAGEQRLSPQGDAGKEDWGPAVPAAQGLSGPPEEEEEQGHGSDLSSEEFEDLGTEASLLPGVPKEVADHVGQVPPVLQPACWDQGGESDGFADEEESGEEGEEEDADEEGAESGAQWWGSGASGGGCKVQDIAQRGDPVQESVGVSGLWDDGLRGAAANVPALEMVSQDSAEPSGSEESESASLEGEEGQVTDHLDAPQEVTSMVPGVGDAFDIGGQSPNLDSEQVNGKMENGLEQAEGQVVLDGDEDQELLLQGQEVGALKVPLVASPVHLGPSQPLKFTLSGVDGDSWSSGED.

Met-1 carries the N-acetylmethionine modification. Residues 1–7 (MEGCVGE) are head. Residues 8-43 (ESFQMWELNRRLEAYLTRVKTLEEQNQLLSAELGGL) form a coil 1A region. The IF rod domain maps to 8–314 (ESFQMWELNR…TLLEAENSRL (307 aa)). Positions 44–55 (RAQSGDTSWRAR) are linker 1. Residues 56-151 (ADDELASLRI…AAHEEERAHL (96 aa)) are coil 1B. The interval 150–172 (HLNAQAACAPRRPPAPPHGSPVR) is disordered. Positions 152–174 (NAQAACAPRRPPAPPHGSPVRAP) are linker 12. Positions 175–193 (EVEDLARRLGEVWRGAVRD) are coil 2A. Residues 194 to 196 (YQE) are linker 2. Residues 197–314 (RVAHMESSLG…TLLEAENSRL (118 aa)) are coil 2B. Residue Ser-312 is modified to Phosphoserine. Residues 315–1893 (QTPGRGSQAS…DGDSWSSGED (1579 aa)) form a tail region. Thr-316 carries the post-translational modification Phosphothreonine. Phosphoserine is present on residues Ser-356 and Ser-359. Position 389 is a phosphothreonine (Thr-389). Disordered regions lie at residues 437-479 (PELE…SGSR), 507-529 (NSSA…SQGP), and 556-879 (KENC…NQKS). Residues 507 to 517 (NSSAQKTQESG) are compositionally biased toward polar residues. At Ser-562 the chain carries Phosphoserine. Basic and acidic residues-rich tracts occupy residues 572–595 (GPEK…EKTL) and 606–615 (LGKEDTRTED). A Phosphoserine modification is found at Ser-620. Composition is skewed to basic and acidic residues over residues 634–646 (ESQE…KEGN) and 670–681 (MLERLVEKEDQS). Ser-685 and Ser-729 each carry phosphoserine. 4 stretches are compositionally biased toward basic and acidic residues: residues 717 to 730 (RLIE…LRSP), 761 to 774 (RLIE…LRSA), 802 to 818 (ILER…LRSP), and 846 to 879 (MLER…NQKS). Position 817 is a phosphoserine (Ser-817). Ser-903 bears the Phosphoserine mark. 2 stretches are compositionally biased toward basic and acidic residues: residues 949–966 (LLED…DRNG) and 989–1051 (QRIV…KSLE). Residues 949–1130 (LLEDKTHKSL…ARSLGKENQE (182 aa)) form a disordered region. Phosphoserine occurs at positions 1005 and 1049. Lys-1136 participates in a covalent cross-link: Glycyl lysine isopeptide (Lys-Gly) (interchain with G-Cter in SUMO1); alternate. Residue Lys-1136 forms a Glycyl lysine isopeptide (Lys-Gly) (interchain with G-Cter in SUMO2); alternate linkage. Ser-1145 and Ser-1166 each carry phosphoserine. The disordered stretch occupies residues 1155-1222 (ETAEEDLERR…ELSSLGKWNV (68 aa)). Residues 1198-1212 (DENRETLTSLEKESQ) show a composition bias toward basic and acidic residues. A phosphoserine mark is found at Ser-1216 and Ser-1229. Residues 1237–1263 (EGLQEEQHQESLREVKQELPSSGNQQR) form a disordered region. Over residues 1241 to 1253 (EEQHQESLREVKQ) the composition is skewed to basic and acidic residues. Residue Ser-1322 is modified to Phosphoserine. Disordered stretches follow at residues 1336–1369 (DNLE…EQDS) and 1388–1824 (EVVG…SEQV). 2 stretches are compositionally biased toward basic and acidic residues: residues 1354–1363 (VTERDEDRAQ) and 1393–1403 (EDPRHFAREEA). 2 stretches are compositionally biased toward acidic residues: residues 1458 to 1469 (ESMEGWEEEEAS) and 1561 to 1576 (QDWE…DDLG). Ser-1570, Ser-1594, Ser-1686, Ser-1695, Ser-1772, and Ser-1774 each carry phosphoserine. Residues 1688–1709 (GFADEEESGEEGEEEDADEEGA) are compositionally biased toward acidic residues. Residues 1773 to 1788 (GSEESESASLEGEEGQ) are compositionally biased toward acidic residues. The span at 1815-1824 (QSPNLDSEQV) shows a compositional bias: polar residues. 3 positions are modified to phosphoserine: Ser-1866, Ser-1889, and Ser-1890. The tract at residues 1870–1893 (LGPSQPLKFTLSGVDGDSWSSGED) is disordered.

The protein belongs to the intermediate filament family. As to quaternary structure, forms homodimers and homotetramers in vitro. In mixtures with other intermediate filament proteins such as vimentin and alpha-internexin, this protein preferentially forms heterodimers which can assemble to form intermediate filaments if nestin does not exceed 25%. Interacts with FHOD3. Constitutively phosphorylated. This increases during mitosis when the cytoplasmic intermediate filament network is reorganized. As to expression, CNS stem cells.

Functionally, required for brain and eye development. Promotes the disassembly of phosphorylated vimentin intermediate filaments (IF) during mitosis and may play a role in the trafficking and distribution of IF proteins and other cellular factors to daughter cells during progenitor cell division. Required for survival, renewal and mitogen-stimulated proliferation of neural progenitor cells. The sequence is that of Nestin (Nes) from Rattus norvegicus (Rat).